The sequence spans 205 residues: MPAPASPSIAGLLLAGGRATRMDGVDKGLQLLDGTPLALHVLRRLAPQVDETLISANRHADRYAELGAPFDARIIADETPDFPGPLAGLLAGMRAARAPLVACSPCDTPYLPVDLVARLRAALDAQQAAIAMAVTVDAQQVRSPQPTFALLRTSLADDLAARLAAGDRKVRAWYARHKTVEVEFRDERAFYNANSWQELAALARR.

Residues 14-16, Lys27, Asp77, and Asp107 each bind GTP; that span reads LAG. Asp107 is a binding site for Mg(2+).

This sequence belongs to the MobA family. As to quaternary structure, monomer. The cofactor is Mg(2+).

The protein resides in the cytoplasm. The catalysed reaction is Mo-molybdopterin + GTP + H(+) = Mo-molybdopterin guanine dinucleotide + diphosphate. Its function is as follows. Transfers a GMP moiety from GTP to Mo-molybdopterin (Mo-MPT) cofactor (Moco or molybdenum cofactor) to form Mo-molybdopterin guanine dinucleotide (Mo-MGD) cofactor. The sequence is that of Molybdenum cofactor guanylyltransferase from Burkholderia orbicola (strain MC0-3).